Reading from the N-terminus, the 346-residue chain is Upstream stimulatory factor 2 (346 aa).

Disordered regions lie at residues 1–44 (MDML…PGAE) and 215–244 (APRTHPYSPKIDGTRTPRDERRRAQHNEVE). A compositionally biased stretch (low complexity) spans 11-20 (ASSATAAAAA). The span at 226 to 244 (DGTRTPRDERRRAQHNEVE) shows a compositional bias: basic and acidic residues. A bHLH domain is found at 235 to 290 (RRRAQHNEVERRRRDKINNWIVQLSKIIPDCHADNSKTGASKGGILSKACDYIREL). The tract at residues 307–328 (LQMDNELLRQQIEELKNENALL) is leucine-zipper.

In terms of assembly, efficient DNA binding requires dimerization with another bHLH protein. Binds DNA as a homodimer or a heterodimer (USF1/USF2). Interacts with MAF.

It is found in the nucleus. Its function is as follows. Transcription factor that binds to a symmetrical DNA sequence (E-boxes) (5'-CACGTG-3') that is found in a variety of viral and cellular promoters. This Mus musculus (Mouse) protein is Upstream stimulatory factor 2 (Usf2).